The sequence spans 185 residues: Large ribosomal subunit protein uL15 (185 aa).

The disordered stretch occupies residues 1–51; the sequence is MDLSSLRPAAGAVKNKKRVGRGQGSGNGTTAGKGNKGQQARSGYQKPINEG. Residues 21-35 show a composition bias toward gly residues; sequence RGQGSGNGTTAGKGN.

The protein belongs to the universal ribosomal protein uL15 family. As to quaternary structure, part of the 50S ribosomal subunit.

Binds to the 23S rRNA. In Chlorobium phaeobacteroides (strain DSM 266 / SMG 266 / 2430), this protein is Large ribosomal subunit protein uL15.